A 1117-amino-acid chain; its full sequence is A disintegrin and metalloproteinase with thrombospondin motifs 6 (1117 aa).

The N-terminal stretch at 1 to 21 (MEILWKTLTWILSLIMASSEF) is a signal peptide. The propeptide occupies 22 to 244 (HSDHRLSYSS…NTHIHHRQKR (223 aa)). N-linked (GlcNAc...) asparagine glycosylation is found at N99, N172, N222, and N234. The region spanning 250–468 (RFVETLVVAD…GRGTCLDNEP (219 aa)) is the Peptidase M12B domain. 11 disulfides stabilise this stretch: C326–C387, C362–C369, C381–C463, C420–C447, C490–C512, C501–C519, C507–C542, C532–C547, C570–C607, C574–C612, and C585–C597. H403 serves as a coordination point for Zn(2+). E404 is an active-site residue. 2 residues coordinate Zn(2+): H407 and H413. In terms of domain architecture, Disintegrin spans 495–557 (GATSRQCKYG…VPFGTWPQSI (63 aa)). A TSP type-1 1 domain is found at 558–613 (DGGWGPWSLWGECSRTCGGGVSSSLRHCDSPAPSGGGKYCLGERKRYRSCNTDPCP). The segment at 717-843 (DAIEGFFNDS…GSGDNEVGFT (127 aa)) is spacer. An N-linked (GlcNAc...) asparagine glycan is attached at N724. TSP type-1 domains follow at residues 840–900 (VGFT…EPCP), 902–960 (EWFI…QSCP), 962–1007 (QWVA…SKPP), and 1018–1073 (PPPR…SKCD). 3 cysteine pairs are disulfide-bonded: C911–C954, C915–C959, and C926–C943. N-linked (GlcNAc...) asparagine glycosylation occurs at N956. The PLAC domain occupies 1079 to 1117 (NTEECKDVNKVAYCPLVLKFKFCSRAYFRQMCCKTCQGH).

The cofactor is Zn(2+). The precursor is cleaved by a furin endopeptidase. Post-translationally, glycosylated. Can be O-fucosylated by POFUT2 on a serine or a threonine residue found within the consensus sequence C1-X(2)-(S/T)-C2-G of the TSP type-1 repeat domains where C1 and C2 are the first and second cysteine residue of the repeat, respectively. Fucosylated repeats can then be further glycosylated by the addition of a beta-1,3-glucose residue by the glucosyltransferase, B3GALTL. Fucosylation mediates the efficient secretion of ADAMTS family members. Can also be C-glycosylated with one or two mannose molecules on tryptophan residues within the consensus sequence W-X-X-W of the TPRs, and N-glycosylated. These other glycosylations can also facilitate secretion. As to expression, expressed at low levels in placenta and barely detectable in a number of other tissues.

The protein localises to the secreted. Its subcellular location is the extracellular space. The protein resides in the extracellular matrix. In Homo sapiens (Human), this protein is A disintegrin and metalloproteinase with thrombospondin motifs 6 (ADAMTS6).